The sequence spans 452 residues: uncharacterized protein (452 aa).

The tract at residues 1–452 (MTAVSSNRNP…LRKPEADTAL (452 aa)) is disordered. Composition is skewed to polar residues over residues 29–41 (RTGTPRTTAVSSN), 95–111 (SPQTGTPRTTAVSSNRN), 129–144 (SPQTGTPGTTAVSSNR), and 163–176 (SPQTGTPGTTAVSS). The segment covering 177–193 (NRDHEDDGCLLKQESRG) has biased composition (basic and acidic residues). 7 stretches are compositionally biased toward polar residues: residues 197-212 (SPQTGTPGTTAVSSNR), 231-245 (SPQTGTPGTTAVSSN), 265-280 (SPQTGTPRTTAVSSNR), 299-314 (SPQTGIPRTTAVSSNR), 333-347 (SPQTGTTRTTAVSSK), 376-394 (TAVSSNRDPRTTAVSSNRN), and 412-426 (SPQTGTPGTTAVSSN). A compositionally biased stretch (basic and acidic residues) spans 439-452 (EPQELRKPEADTAL).

This is an uncharacterized protein from Homo sapiens (Human).